The following is a 107-amino-acid chain: MVNLANVLTNATAATLSAWSNTVPLETYFHFDEASGFGDYYLNVSVIWMNETLYETRIVPAIINVREWLDHMEANDPSPSVTNPYETSGYYAFSTVVPVLMGNMKVA.

This is an uncharacterized protein from Saccharomyces cerevisiae (strain ATCC 204508 / S288c) (Baker's yeast).